We begin with the raw amino-acid sequence, 249 residues long: Type III pantothenate kinase (249 aa).

ATP is bound at residue D6–K13. Residues Y93 and G100 to R103 each bind substrate. D102 functions as the Proton acceptor in the catalytic mechanism. Residue D122 coordinates K(+). T125 contacts ATP. Substrate is bound at residue T181.

This sequence belongs to the type III pantothenate kinase family. In terms of assembly, homodimer. It depends on NH4(+) as a cofactor. K(+) serves as cofactor.

Its subcellular location is the cytoplasm. It carries out the reaction (R)-pantothenate + ATP = (R)-4'-phosphopantothenate + ADP + H(+). The protein operates within cofactor biosynthesis; coenzyme A biosynthesis; CoA from (R)-pantothenate: step 1/5. In terms of biological role, catalyzes the phosphorylation of pantothenate (Pan), the first step in CoA biosynthesis. This is Type III pantothenate kinase from Pseudomonas putida (strain W619).